A 587-amino-acid chain; its full sequence is Lipoprotein LpqB (587 aa).

Positions 1-19 are cleaved as a signal peptide; the sequence is MERLMRLTILLFLGAVLAG. The N-palmitoyl cysteine moiety is linked to residue cysteine 20. Residue cysteine 20 is the site of S-diacylglycerol cysteine attachment.

It belongs to the LpqB lipoprotein family. In terms of assembly, interacts with MtrB, probably extracytoplasmically.

It is found in the cell membrane. The protein localises to the secreted. Its subcellular location is the cell wall. May modulate activity of the MtrAB system in controlling homeostasis of the cell wall and cell division. This chain is Lipoprotein LpqB, found in Mycobacterium tuberculosis (strain CDC 1551 / Oshkosh).